Consider the following 594-residue polypeptide: APOBEC1 complementation factor (594 aa).

RRM domains are found at residues 56 to 134, 136 to 218, and 231 to 303; these read CEIF…ASVD, CRLF…WAEP, and KILY…LAKP. Residues 359-408 are required for nuclear localization; sequence HFPATKGHLSNRALIRTPSVREIYMNVPVGAAGVRGLGGRGYLAYTGLGR. At T498 the chain carries Phosphothreonine.

As to quaternary structure, part of the apolipoprotein B mRNA editing complex with APOBEC1. Interacts with TNPO2; TNPO2 may be responsible for transport of A1CF into the nucleus. Interacts with SYNCRIP. Interacts with CELF2/CUGBP2. Interacts with RBM47. Isoforms 1 and 2 are widely expressed while isoforms 3 and 4 are restricted to liver and small intestine.

It is found in the nucleus. Its subcellular location is the endoplasmic reticulum. The protein resides in the cytoplasm. Essential component of the apolipoprotein B mRNA editing enzyme complex which is responsible for the postranscriptional editing of a CAA codon for Gln to a UAA codon for stop in APOB mRNA. Binds to APOB mRNA and is probably responsible for docking the catalytic subunit, APOBEC1, to the mRNA to allow it to deaminate its target cytosine. The complex also seems to protect the edited APOB mRNA from nonsense-mediated decay. The sequence is that of APOBEC1 complementation factor (A1cf) from Rattus norvegicus (Rat).